Consider the following 336-residue polypeptide: Pentalenene synthase (336 aa).

Mg(2+) contacts are provided by Asp80, Asp84, Asn219, Ser223, and Glu227. The DDXXD motif signature appears at 80-84; it reads DDLFD.

Belongs to the terpene synthase family. Monomer. Requires Mg(2+) as cofactor.

It catalyses the reaction (2E,6E)-farnesyl diphosphate = pentalenene + diphosphate. It participates in antibiotic biosynthesis; neopentalenolactone biosynthesis. Functionally, catalyzes the cyclization of farnesyl diphosphate (FPP) to the tricyclic sesquiterpene pentalenene in the biosynthesis of neopentalenolactone antibiotic. The chain is Pentalenene synthase (ptlA) from Streptomyces avermitilis (strain ATCC 31267 / DSM 46492 / JCM 5070 / NBRC 14893 / NCIMB 12804 / NRRL 8165 / MA-4680).